Consider the following 316-residue polypeptide: Ribosomal RNA large subunit methyltransferase F (316 aa).

It belongs to the methyltransferase superfamily. METTL16/RlmF family.

It is found in the cytoplasm. The enzyme catalyses adenosine(1618) in 23S rRNA + S-adenosyl-L-methionine = N(6)-methyladenosine(1618) in 23S rRNA + S-adenosyl-L-homocysteine + H(+). Its function is as follows. Specifically methylates the adenine in position 1618 of 23S rRNA. The chain is Ribosomal RNA large subunit methyltransferase F from Pseudomonas entomophila (strain L48).